The primary structure comprises 63 residues: Large ribosomal subunit protein uL29 (63 aa).

The protein belongs to the universal ribosomal protein uL29 family.

This chain is Large ribosomal subunit protein uL29, found in Vibrio campbellii (strain ATCC BAA-1116).